Here is a 709-residue protein sequence, read N- to C-terminus: Meiotic sister-chromatid recombination protein 6, mitochondrial (709 aa).

The N-terminal 29 residues, Met-1–Leu-29, are a transit peptide targeting the mitochondrion.

It is found in the mitochondrion. In terms of biological role, may be involved in the control of meiotic sister-chromatid recombination. In Candida glabrata (strain ATCC 2001 / BCRC 20586 / JCM 3761 / NBRC 0622 / NRRL Y-65 / CBS 138) (Yeast), this protein is Meiotic sister-chromatid recombination protein 6, mitochondrial (MSC6).